The sequence spans 475 residues: MSPKTETKASVGFKAGVKDYRLTYYTPEYQTKDTDILAAFRVTPQPGVPPEEAGAAVAAESSTGTWTTVWTDGLTSLDRYKGRCYDIEPVPGEESQFIAYVAYPLDLFEEGSVTNLFTSIVGNVFGFKALRALRLEDLRIPPAYSKTFQGPPHGIQVERDKLNKYGRPLLGCTIKPKLGLSAKNYGRAVYECLRGGLDFTKDDENVNSQPFMRWRDRFCFCAEALYKAQAETGEIKGHYLNATAGTCEEMMKRAVFARELGVPIVMHDYLTGGFTANTSLAHYCRDNGLLLHIHRAMHAVIDRQRNHGMHFRVLAKALRMSGGDHIHAGTVVGKLEGEREVTLGFVDLLRDDFIEKDRSRGIYFTQDWVSMPGVLPVASGGIHVWHMPALTEIFGDDSVLQFGGGTLGHPWGNAPGAVANRVALEACVQARNEGRDLAREGNQVIREATKWSPELAAACEVWKEIKFEFDTIDRL.

Residues 1–2 constitute a propeptide that is removed on maturation; the sequence is MS. Pro-3 bears the N-acetylproline mark. Lys-14 bears the N6,N6,N6-trimethyllysine mark. 2 residues coordinate substrate: Asn-123 and Thr-173. Lys-175 serves as the catalytic Proton acceptor. Residue Lys-177 participates in substrate binding. The Mg(2+) site is built by Lys-201, Asp-203, and Glu-204. Residue Lys-201 is modified to N6-carboxylysine. Residue His-294 is the Proton acceptor of the active site. Positions 295, 327, and 379 each coordinate substrate.

This sequence belongs to the RuBisCO large chain family. Type I subfamily. In terms of assembly, heterohexadecamer of 8 large chains and 8 small chains; disulfide-linked. The disulfide link is formed within the large subunit homodimers. It depends on Mg(2+) as a cofactor. In terms of processing, the disulfide bond which can form in the large chain dimeric partners within the hexadecamer appears to be associated with oxidative stress and protein turnover.

The protein localises to the plastid. Its subcellular location is the chloroplast. The enzyme catalyses 2 (2R)-3-phosphoglycerate + 2 H(+) = D-ribulose 1,5-bisphosphate + CO2 + H2O. The catalysed reaction is D-ribulose 1,5-bisphosphate + O2 = 2-phosphoglycolate + (2R)-3-phosphoglycerate + 2 H(+). Functionally, ruBisCO catalyzes two reactions: the carboxylation of D-ribulose 1,5-bisphosphate, the primary event in carbon dioxide fixation, as well as the oxidative fragmentation of the pentose substrate in the photorespiration process. Both reactions occur simultaneously and in competition at the same active site. This chain is Ribulose bisphosphate carboxylase large chain, found in Cryptomeria japonica (Japanese cedar).